A 209-amino-acid chain; its full sequence is Inorganic pyrophosphatase (209 aa).

Lys-38, Arg-52, and Tyr-64 together coordinate substrate. Mg(2+) contacts are provided by Asp-92, Asp-97, and Asp-130. Tyr-167 contacts substrate.

It belongs to the PPase family. As to quaternary structure, homohexamer. Mg(2+) is required as a cofactor.

The protein resides in the cytoplasm. It carries out the reaction diphosphate + H2O = 2 phosphate + H(+). In terms of biological role, catalyzes the hydrolysis of inorganic pyrophosphate (PPi) forming two phosphate ions. In Chlamydia muridarum (strain MoPn / Nigg), this protein is Inorganic pyrophosphatase.